Consider the following 969-residue polypeptide: RNA polymerase-associated protein RapA (969 aa).

The region spanning 162–339 is the Helicase ATP-binding domain; the sequence is EVGQRVAPRV…FARLALLDAD (178 aa). Position 175–182 (175–182) interacts with ATP; that stretch reads DEVGLGKT. A DEAH box motif is present at residues 285–288; that stretch reads DEAH. Positions 492-663 constitute a Helicase C-terminal domain; it reads RIEWLITFLK…GFLKNPQAVG (172 aa).

It belongs to the SNF2/RAD54 helicase family. RapA subfamily. As to quaternary structure, interacts with the RNAP. Has a higher affinity for the core RNAP than for the holoenzyme. Its ATPase activity is stimulated by binding to RNAP.

Functionally, transcription regulator that activates transcription by stimulating RNA polymerase (RNAP) recycling in case of stress conditions such as supercoiled DNA or high salt concentrations. Probably acts by releasing the RNAP, when it is trapped or immobilized on tightly supercoiled DNA. Does not activate transcription on linear DNA. Probably not involved in DNA repair. The chain is RNA polymerase-associated protein RapA from Actinobacillus pleuropneumoniae serotype 5b (strain L20).